The primary structure comprises 21 residues: Glutathione S-transferase 1 (21 aa).

It belongs to the GST superfamily. Phi family.

The enzyme catalyses RX + glutathione = an S-substituted glutathione + a halide anion + H(+). Its function is as follows. Conjugation of reduced glutathione to a wide number of exogenous and endogenous hydrophobic electrophiles. In plants, may have a detoxification role against certain herbicides. This Populus euphratica (Euphrates poplar) protein is Glutathione S-transferase 1.